We begin with the raw amino-acid sequence, 97 residues long: UPF0235 protein HD_0778 (97 aa).

Belongs to the UPF0235 family.

This chain is UPF0235 protein HD_0778, found in Haemophilus ducreyi (strain 35000HP / ATCC 700724).